The following is a 901-amino-acid chain: Protein translocase subunit SecA (901 aa).

ATP contacts are provided by residues Q89, 107–111, and D502; that span reads GEGKT. The disordered stretch occupies residues 838–883; sequence YQQQQAETEAQMHPEHEEAEGGEVSGRVAGFDETDPTTWGNPSRND. 4 residues coordinate Zn(2+): C885, C887, C896, and H897.

This sequence belongs to the SecA family. In terms of assembly, monomer and homodimer. Part of the essential Sec protein translocation apparatus which comprises SecA, SecYEG and auxiliary proteins SecDF-YajC and YidC. It depends on Zn(2+) as a cofactor.

It localises to the cell inner membrane. It is found in the cytoplasm. The catalysed reaction is ATP + H2O + cellular proteinSide 1 = ADP + phosphate + cellular proteinSide 2.. Part of the Sec protein translocase complex. Interacts with the SecYEG preprotein conducting channel. Has a central role in coupling the hydrolysis of ATP to the transfer of proteins into and across the cell membrane, serving both as a receptor for the preprotein-SecB complex and as an ATP-driven molecular motor driving the stepwise translocation of polypeptide chains across the membrane. This chain is Protein translocase subunit SecA, found in Paracoccus denitrificans (strain Pd 1222).